The following is a 91-amino-acid chain: UPF0386 protein Caul_4643 (91 aa).

It belongs to the UPF0386 family.

This Caulobacter sp. (strain K31) protein is UPF0386 protein Caul_4643.